Here is a 174-residue protein sequence, read N- to C-terminus: Peptide methionine sulfoxide reductase MsrA (174 aa).

Residue C11 is part of the active site.

The protein belongs to the MsrA Met sulfoxide reductase family.

It catalyses the reaction L-methionyl-[protein] + [thioredoxin]-disulfide + H2O = L-methionyl-(S)-S-oxide-[protein] + [thioredoxin]-dithiol. The enzyme catalyses [thioredoxin]-disulfide + L-methionine + H2O = L-methionine (S)-S-oxide + [thioredoxin]-dithiol. Its function is as follows. Has an important function as a repair enzyme for proteins that have been inactivated by oxidation. Catalyzes the reversible oxidation-reduction of methionine sulfoxide in proteins to methionine. This chain is Peptide methionine sulfoxide reductase MsrA, found in Nitratiruptor sp. (strain SB155-2).